Consider the following 349-residue polypeptide: 4-hydroxy-3-methylbut-2-en-1-yl diphosphate synthase (flavodoxin) (349 aa).

4 residues coordinate [4Fe-4S] cluster: C264, C267, C299, and E306.

The protein belongs to the IspG family. Requires [4Fe-4S] cluster as cofactor.

The enzyme catalyses (2E)-4-hydroxy-3-methylbut-2-enyl diphosphate + oxidized [flavodoxin] + H2O + 2 H(+) = 2-C-methyl-D-erythritol 2,4-cyclic diphosphate + reduced [flavodoxin]. Its pathway is isoprenoid biosynthesis; isopentenyl diphosphate biosynthesis via DXP pathway; isopentenyl diphosphate from 1-deoxy-D-xylulose 5-phosphate: step 5/6. Converts 2C-methyl-D-erythritol 2,4-cyclodiphosphate (ME-2,4cPP) into 1-hydroxy-2-methyl-2-(E)-butenyl 4-diphosphate. The sequence is that of 4-hydroxy-3-methylbut-2-en-1-yl diphosphate synthase (flavodoxin) from Clostridium tetani (strain Massachusetts / E88).